We begin with the raw amino-acid sequence, 317 residues long: Acetyl-coenzyme A carboxylase carboxyl transferase subunit alpha (317 aa).

Residues 32-293 enclose the CoA carboxyltransferase C-terminal domain; sequence NLSEEIARLE…KRLLTSELQA (262 aa).

This sequence belongs to the AccA family. In terms of assembly, acetyl-CoA carboxylase is a heterohexamer composed of biotin carboxyl carrier protein (AccB), biotin carboxylase (AccC) and two subunits each of ACCase subunit alpha (AccA) and ACCase subunit beta (AccD).

The protein resides in the cytoplasm. It catalyses the reaction N(6)-carboxybiotinyl-L-lysyl-[protein] + acetyl-CoA = N(6)-biotinyl-L-lysyl-[protein] + malonyl-CoA. Its pathway is lipid metabolism; malonyl-CoA biosynthesis; malonyl-CoA from acetyl-CoA: step 1/1. Functionally, component of the acetyl coenzyme A carboxylase (ACC) complex. First, biotin carboxylase catalyzes the carboxylation of biotin on its carrier protein (BCCP) and then the CO(2) group is transferred by the carboxyltransferase to acetyl-CoA to form malonyl-CoA. The chain is Acetyl-coenzyme A carboxylase carboxyl transferase subunit alpha from Legionella pneumophila (strain Paris).